A 734-amino-acid chain; its full sequence is Elongation factor 2 (734 aa).

A tr-type G domain is found at glutamate 18 to arginine 259. GTP contacts are provided by residues alanine 27 to threonine 34, aspartate 93 to histidine 97, and asparagine 147 to aspartate 150. Histidine 600 carries the post-translational modification Diphthamide.

It belongs to the TRAFAC class translation factor GTPase superfamily. Classic translation factor GTPase family. EF-G/EF-2 subfamily.

Its subcellular location is the cytoplasm. Its function is as follows. Catalyzes the GTP-dependent ribosomal translocation step during translation elongation. During this step, the ribosome changes from the pre-translocational (PRE) to the post-translocational (POST) state as the newly formed A-site-bound peptidyl-tRNA and P-site-bound deacylated tRNA move to the P and E sites, respectively. Catalyzes the coordinated movement of the two tRNA molecules, the mRNA and conformational changes in the ribosome. The chain is Elongation factor 2 (fusA) from Desulfurococcus mucosus (Desulfurococcus mobilis).